A 253-amino-acid chain; its full sequence is Ribosomal RNA small subunit methyltransferase A (253 aa).

S-adenosyl-L-methionine contacts are provided by histidine 12, leucine 14, glycine 39, glutamate 60, aspartate 81, and asparagine 104.

It belongs to the class I-like SAM-binding methyltransferase superfamily. rRNA adenine N(6)-methyltransferase family. RsmA subfamily.

It is found in the cytoplasm. The enzyme catalyses adenosine(1518)/adenosine(1519) in 16S rRNA + 4 S-adenosyl-L-methionine = N(6)-dimethyladenosine(1518)/N(6)-dimethyladenosine(1519) in 16S rRNA + 4 S-adenosyl-L-homocysteine + 4 H(+). Functionally, specifically dimethylates two adjacent adenosines (A1518 and A1519) in the loop of a conserved hairpin near the 3'-end of 16S rRNA in the 30S particle. May play a critical role in biogenesis of 30S subunits. This is Ribosomal RNA small subunit methyltransferase A from Paracidovorax citrulli (strain AAC00-1) (Acidovorax citrulli).